Here is a 124-residue protein sequence, read N- to C-terminus: Large ribosomal subunit protein uL29 (124 aa).

Belongs to the universal ribosomal protein uL29 family.

This chain is Large ribosomal subunit protein uL29 (RPL35), found in Tetrahymena thermophila (strain SB210).